A 222-amino-acid chain; its full sequence is CCA-adding enzyme (222 aa).

ATP-binding residues include S50 and K53. Residues S50 and K53 each coordinate CTP. Mg(2+) contacts are provided by D61, D63, and D112. ATP-binding residues include H135, K155, and Y164. Residues H135, K155, and Y164 each coordinate CTP.

Belongs to the tRNA nucleotidyltransferase/poly(A) polymerase family. Archaeal CCA-adding enzyme subfamily. In terms of assembly, homodimer. Mg(2+) serves as cofactor.

The enzyme catalyses a tRNA precursor + 2 CTP + ATP = a tRNA with a 3' CCA end + 3 diphosphate. It catalyses the reaction a tRNA with a 3' CCA end + 2 CTP + ATP = a tRNA with a 3' CCACCA end + 3 diphosphate. Catalyzes the addition and repair of the essential 3'-terminal CCA sequence in tRNAs without using a nucleic acid template. Adds these three nucleotides in the order of C, C, and A to the tRNA nucleotide-73, using CTP and ATP as substrates and producing inorganic pyrophosphate. tRNA 3'-terminal CCA addition is required both for tRNA processing and repair. Also involved in tRNA surveillance by mediating tandem CCA addition to generate a CCACCA at the 3' terminus of unstable tRNAs. While stable tRNAs receive only 3'-terminal CCA, unstable tRNAs are marked with CCACCA and rapidly degraded. This chain is CCA-adding enzyme, found in Thermoplasma acidophilum.